Reading from the N-terminus, the 303-residue chain is BAG family molecular chaperone regulator 3 (303 aa).

The span at 1–11 (MMKMNTGTSPS) shows a compositional bias: polar residues. The interval 1 to 27 (MMKMNTGTSPSVIGGGTSGNEWESRPG) is disordered. The Ubiquitin-like domain maps to 45 to 119 (FRVRVKYGSV…LVVKEDPISQ (75 aa)). Residues 138–216 (SISDISFEVD…KYVEALDLLK (79 aa)) form the BAG domain. A disordered region spans residues 249-268 (VEEEEEEPRNSNASSSSGTP). Positions 258–267 (NSNASSSSGT) are enriched in polar residues. Residue Ser263 is modified to Phosphoserine.

As to quaternary structure, binds to the ATPase domain of HSP70/HSC70 chaperones. Interacts with HSP70-1.

Functionally, co-chaperone that regulates diverse cellular pathways, such as programmed cell death and stress responses. The polypeptide is BAG family molecular chaperone regulator 3 (BAG3) (Arabidopsis thaliana (Mouse-ear cress)).